We begin with the raw amino-acid sequence, 470 residues long: Nuclear receptor ROR-beta (470 aa).

Residues 18-93 (VIPCKICGDK…LGMSRDAVKF (76 aa)) constitute a DNA-binding region (nuclear receptor). NR C4-type zinc fingers lie at residues 21–41 (CKIC…CEGC) and 57–81 (CPRQ…LQKC). The segment covering 104–117 (LYAEVQKHQQRLQE) has biased composition (basic and acidic residues). The segment at 104–127 (LYAEVQKHQQRLQEQRQQQSGEAE) is disordered. The region spanning 222-460 (EIDRIAQNII…TLFPPLYKEL (239 aa)) is the NR LBD domain. Positions 456-461 (LYKELF) match the AF-2 motif.

It belongs to the nuclear hormone receptor family. NR1 subfamily. In terms of assembly, monomer. Interacts with CRX.

Its subcellular location is the nucleus. It localises to the nucleoplasm. Nuclear receptor that binds DNA as a monomer to ROR response elements (RORE) containing a single core motif half-site 5'-AGGTCA-3' preceded by a short A-T-rich sequence. Considered to have intrinsic transcriptional activity, have some natural ligands such as all-trans retinoic acid (ATRA) and other retinoids which act as inverse agonists repressing the transcriptional activity. Required for normal postnatal development of rod and cone photoreceptor cells. Modulates rod photoreceptors differentiation at least by inducing the transcription factor NRL-mediated pathway. In cone photoreceptor cells, regulates transcription of OPN1SW. Involved in the regulation of the period length and stability of the circadian rhythm. May control cytoarchitectural patterning of neocortical neurons during development. May act in a dose-dependent manner to regulate barrel formation upon innervation of layer IV neurons by thalamocortical axons. May play a role in the suppression of osteoblastic differentiation through the inhibition of RUNX2 transcriptional activity. Functionally, isoform 1 is critical for hindlimb motor control and for the differentiation of amacrine and horizontal cells in the retina. Regulates the expression of PTF1A synergistically with FOXN4. This is Nuclear receptor ROR-beta (RORB) from Homo sapiens (Human).